Reading from the N-terminus, the 200-residue chain is MSDQLELMTGTTVGIKAKDGVVLAAEKRVSYGFYLMSKSGKKVYPITNRIGLASSGILADIQTITKVIRANIANMEIEMKRPVSVRAAAKLLSIMLFQNKYMPYIAETMVGGIDEEGPKLFILDSWGSLIEDDFAALGNGARTAIGLIETGYSSSITVKEAKELAIKAIKEAIARDPTSGDGIDTLVITGNGYLEDSIKL.

A propeptide spans methionine 1 to glycine 10 (removed in mature form; by autocatalysis). Catalysis depends on threonine 11, which acts as the Nucleophile.

It belongs to the peptidase T1B family. In terms of assembly, the 20S proteasome core is composed of 14 alpha and 14 beta subunits that assemble into four stacked heptameric rings, resulting in a barrel-shaped structure. The two inner rings, each composed of seven catalytic beta subunits, are sandwiched by two outer rings, each composed of seven alpha subunits. The catalytic chamber with the active sites is on the inside of the barrel. Has a gated structure, the ends of the cylinder being occluded by the N-termini of the alpha-subunits. Is capped at one or both ends by the proteasome regulatory ATPase, PAN.

Its subcellular location is the cytoplasm. The enzyme catalyses Cleavage of peptide bonds with very broad specificity.. Its activity is regulated as follows. The formation of the proteasomal ATPase PAN-20S proteasome complex, via the docking of the C-termini of PAN into the intersubunit pockets in the alpha-rings, triggers opening of the gate for substrate entry. Interconversion between the open-gate and close-gate conformations leads to a dynamic regulation of the 20S proteasome proteolysis activity. In terms of biological role, component of the proteasome core, a large protease complex with broad specificity involved in protein degradation. This chain is Proteasome subunit beta 2, found in Caldivirga maquilingensis (strain ATCC 700844 / DSM 13496 / JCM 10307 / IC-167).